The primary structure comprises 206 residues: Probable GTP-binding protein EngB (206 aa).

The EngB-type G domain maps to 8–195; sequence RDAEVVLVGR…EECLRTRFHE (188 aa). GTP contacts are provided by residues 16–23, 41–45, 60–63, 140–143, and 175–177; these read GRSNVGKS, GVTRQ, DLPG, NKTD, and ICA. The Mg(2+) site is built by serine 23 and threonine 43.

It belongs to the TRAFAC class TrmE-Era-EngA-EngB-Septin-like GTPase superfamily. EngB GTPase family. Mg(2+) serves as cofactor.

In terms of biological role, necessary for normal cell division and for the maintenance of normal septation. The protein is Probable GTP-binding protein EngB of Halorubrum lacusprofundi (strain ATCC 49239 / DSM 5036 / JCM 8891 / ACAM 34).